Consider the following 134-residue polypeptide: Profilin-3 (134 aa).

Cysteine 13 and cysteine 118 are oxidised to a cystine. Positions 84–100 match the Involved in PIP2 interaction motif; it reads AVIRGKKGSGGITIKKT. Phosphothreonine is present on threonine 114.

The protein belongs to the profilin family. As to quaternary structure, occurs in many kinds of cells as a complex with monomeric actin in a 1:1 ratio. Phosphorylated by MAP kinases.

The protein localises to the cytoplasm. The protein resides in the cytoskeleton. Functionally, binds to actin and affects the structure of the cytoskeleton. At high concentrations, profilin prevents the polymerization of actin, whereas it enhances it at low concentrations. The polypeptide is Profilin-3 (Olea europaea (Common olive)).